Reading from the N-terminus, the 385-residue chain is 8-amino-7-oxononanoate synthase (385 aa).

R21 is a substrate binding site. A pyridoxal 5'-phosphate-binding site is contributed by 108-109; it reads GF. Position 133 (H133) interacts with substrate. 3 residues coordinate pyridoxal 5'-phosphate: S179, H207, and T233. Residue K236 is modified to N6-(pyridoxal phosphate)lysine. T352 contacts substrate.

The protein belongs to the class-II pyridoxal-phosphate-dependent aminotransferase family. BioF subfamily. Homodimer. Requires pyridoxal 5'-phosphate as cofactor.

The enzyme catalyses 6-carboxyhexanoyl-[ACP] + L-alanine + H(+) = (8S)-8-amino-7-oxononanoate + holo-[ACP] + CO2. The protein operates within cofactor biosynthesis; biotin biosynthesis. Its function is as follows. Catalyzes the decarboxylative condensation of pimeloyl-[acyl-carrier protein] and L-alanine to produce 8-amino-7-oxononanoate (AON), [acyl-carrier protein], and carbon dioxide. In Salmonella typhimurium (strain LT2 / SGSC1412 / ATCC 700720), this protein is 8-amino-7-oxononanoate synthase.